A 492-amino-acid polypeptide reads, in one-letter code: Catalase isozyme 2 (492 aa).

Catalysis depends on residues H65 and N138. Y348 serves as a coordination point for heme.

This sequence belongs to the catalase family. As to quaternary structure, homotetramer. Heme serves as cofactor.

Its subcellular location is the peroxisome. It is found in the glyoxysome. The enzyme catalyses 2 H2O2 = O2 + 2 H2O. In terms of biological role, occurs in almost all aerobically respiring organisms and serves to protect cells from the toxic effects of hydrogen peroxide. The sequence is that of Catalase isozyme 2 (CAT2) from Solanum tuberosum (Potato).